Consider the following 630-residue polypeptide: Pentatricopeptide repeat-containing protein At1g63130, mitochondrial (630 aa).

The transit peptide at methionine 1 to lysine 22 directs the protein to the mitochondrion. PPR repeat units follow at residues serine 80–histidine 114, asparagine 115–proline 149, aspartate 150–proline 184, aspartate 185–proline 219, aspartate 220–proline 254, glycine 255–proline 289, asparagine 290–proline 324, asparagine 325–proline 359, aspartate 360–proline 394, asparagine 395–glycine 429, asparagine 430–proline 464, aspartate 465–proline 499, aspartate 500–proline 534, asparagine 535–proline 569, and aspartate 570–glycine 604.

It belongs to the PPR family. P subfamily.

The protein resides in the mitochondrion. The chain is Pentatricopeptide repeat-containing protein At1g63130, mitochondrial from Arabidopsis thaliana (Mouse-ear cress).